The sequence spans 430 residues: Ribulose bisphosphate carboxylase (430 aa).

The Proton acceptor role is filled by K160. Substrate is bound at residue K162. Mg(2+) is bound by residues K186, D188, and E189. N6-carboxylysine is present on K186. Catalysis depends on H278, which acts as the Proton acceptor. Substrate is bound by residues R279, H311, 348–350 (SGG), and 370–373 (QAGG).

The protein belongs to the RuBisCO large chain family. Type III subfamily. In terms of assembly, homodimer or homodecamer. In contrast to form I RuBisCO, the form III RuBisCO is composed solely of large subunits. Mg(2+) serves as cofactor.

The enzyme catalyses 2 (2R)-3-phosphoglycerate + 2 H(+) = D-ribulose 1,5-bisphosphate + CO2 + H2O. It catalyses the reaction D-ribulose 1,5-bisphosphate + O2 = 2-phosphoglycolate + (2R)-3-phosphoglycerate + 2 H(+). Its function is as follows. Catalyzes the addition of molecular CO(2) and H(2)O to ribulose 1,5-bisphosphate (RuBP), generating two molecules of 3-phosphoglycerate (3-PGA). Functions in an archaeal AMP degradation pathway, together with AMP phosphorylase and R15P isomerase. This chain is Ribulose bisphosphate carboxylase, found in Pyrococcus horikoshii (strain ATCC 700860 / DSM 12428 / JCM 9974 / NBRC 100139 / OT-3).